The following is a 446-amino-acid chain: UDP-N-acetylmuramate--L-alanine ligase (446 aa).

ATP is bound at residue G122–T128.

This sequence belongs to the MurCDEF family.

It localises to the cytoplasm. The catalysed reaction is UDP-N-acetyl-alpha-D-muramate + L-alanine + ATP = UDP-N-acetyl-alpha-D-muramoyl-L-alanine + ADP + phosphate + H(+). It participates in cell wall biogenesis; peptidoglycan biosynthesis. Its function is as follows. Cell wall formation. The sequence is that of UDP-N-acetylmuramate--L-alanine ligase from Nocardioides sp. (strain ATCC BAA-499 / JS614).